We begin with the raw amino-acid sequence, 147 residues long: Myosin regulatory light chain (147 aa).

Position 1 is an N-acetylthreonine (Thr1). EF-hand domains lie at 2–37, 73–108, and 109–144; these read ASAD…LGKN, EQSK…LGDA, and LTSS…GYPL. Ca(2+) is bound by residues Asp15, Asp17, Asp19, Lys21, Glu26, Asp86, Asn90, Thr92, and Glu97.

In Physarum polycephalum (Slime mold), this protein is Myosin regulatory light chain.